Reading from the N-terminus, the 341-residue chain is NADH-ubiquinone oxidoreductase chain 2 (341 aa).

10 helical membrane passes run 8 to 28 (ILFT…NSWL), 61 to 81 (FLTQ…LMLA), 95 to 115 (MIIM…FWFP), 121 to 141 (LTWM…LMLI), 146 to 166 (IKNL…IGGL), 174 to 194 (LMAF…MISE), 195 to 215 (SIWL…TFMF), 238 to 258 (FSLF…GFLP), 273 to 293 (FLLT…LRIC), and 321 to 341 (LIMT…FFML).

This sequence belongs to the complex I subunit 2 family.

It is found in the mitochondrion inner membrane. It carries out the reaction a ubiquinone + NADH + 5 H(+)(in) = a ubiquinol + NAD(+) + 4 H(+)(out). In terms of biological role, core subunit of the mitochondrial membrane respiratory chain NADH dehydrogenase (Complex I) that is believed to belong to the minimal assembly required for catalysis. Complex I functions in the transfer of electrons from NADH to the respiratory chain. The immediate electron acceptor for the enzyme is believed to be ubiquinone. The polypeptide is NADH-ubiquinone oxidoreductase chain 2 (mt:ND2) (Drosophila yakuba (Fruit fly)).